We begin with the raw amino-acid sequence, 2515 residues long: Protein tudor (2515 aa).

Phosphoserine is present on residues serine 226, serine 235, and serine 239. 2 Tudor domains span residues 455–513 and 641–696; these read APEL…LLEI and QLIL…HLEM. Serine 800 bears the Phosphoserine mark. The interval 840-996 is disordered; it reads QAVKSVSGSK…SSSESVAAAK (157 aa). A compositionally biased stretch (low complexity) spans 890-900; that stretch reads STGSYSSGMSS. Residues 906-917 show a composition bias toward polar residues; that stretch reads RQQNGRTPIQSP. Basic and acidic residues predominate over residues 918-927; that stretch reads RHNEKQEAKK. Composition is skewed to polar residues over residues 943-954 and 964-976; these read GQQGNQRSQNAP and QKSTLDGNISSKR. The span at 977-995 shows a compositional bias: low complexity; it reads SSGVGSDIASSSSESVAAA. 2 Tudor domains span residues 1062 to 1122 and 1355 to 1414; these read QLKV…FADP and KFDV…FYEH. Positions 1515-1589 are disordered; the sequence is EEDKGRKETV…KPATPVPEVV (75 aa). The segment covering 1540–1553 has biased composition (basic and acidic residues); it reads NDKDREPKKSKPAE. The span at 1569–1584 shows a compositional bias: pro residues; sequence SPVPAEPAPVPKPATP. Tudor domains lie at 1662–1718, 1839–1898, 2023–2082, 2211–2269, and 2392–2451; these read NVVN…SHIE, GFEK…SLPS, KAAV…LIKP, TTNS…PIPS, and DLKE…KPAR.

As to quaternary structure, may form part of a piRNA processing complex consisting of tud, aub and AGO3. Interacts with AGO3 (when symmetrically dimethylated on Arg residues) and aub (when symmetrically dimethylated on Arg residues). Interacts with vls. Interacts with me31B/DDX6 (when symmetrically dimethylated on Arg residues).

Its subcellular location is the cytoplasm. It is found in the perinuclear region. The protein localises to the cytoplasmic ribonucleoprotein granule. Functionally, may act via the Piwi-interacting RNA (piRNA) metabolic process mediated by aub and AGO3 Piwi proteins, which mediates the repression of transposable elements during meiosis by forming complexes composed of piRNAs and Piwi proteins and governs the methylation and subsequent repression of transposons. Required during oogenesis for the formation of primordial germ cells and for normal abdominal segmentation. Not involved in repression of retroelements. The polypeptide is Protein tudor (Drosophila melanogaster (Fruit fly)).